A 239-amino-acid chain; its full sequence is Purine nucleoside phosphorylase DeoD-type (239 aa).

His-5 serves as a coordination point for a purine D-ribonucleoside. Phosphate-binding positions include Gly-21, Arg-25, Arg-44, and 88-91 (RVGS). Residues 180–182 (EME) and 204–205 (SD) contribute to the a purine D-ribonucleoside site. The Proton donor role is filled by Asp-205.

The protein belongs to the PNP/UDP phosphorylase family. Homohexamer; trimer of homodimers.

The enzyme catalyses a purine D-ribonucleoside + phosphate = a purine nucleobase + alpha-D-ribose 1-phosphate. The catalysed reaction is a purine 2'-deoxy-D-ribonucleoside + phosphate = a purine nucleobase + 2-deoxy-alpha-D-ribose 1-phosphate. In terms of biological role, catalyzes the reversible phosphorolytic breakdown of the N-glycosidic bond in the beta-(deoxy)ribonucleoside molecules, with the formation of the corresponding free purine bases and pentose-1-phosphate. This is Purine nucleoside phosphorylase DeoD-type from Salmonella gallinarum (strain 287/91 / NCTC 13346).